Consider the following 221-residue polypeptide: Beta-phosphoglucomutase (221 aa).

Aspartate 8 (nucleophile) is an active-site residue. 2 residues coordinate Mg(2+): aspartate 8 and aspartate 10. A 4-aspartylphosphate modification is found at aspartate 8. Residue aspartate 10 is the Proton donor/acceptor of the active site. Aspartate 10, glycine 46, valine 47, arginine 49, serine 116, lysine 117, and asparagine 118 together coordinate beta-D-glucose 6-phosphate. Aspartate 170 is a Mg(2+) binding site.

It belongs to the HAD-like hydrolase superfamily. CbbY/CbbZ/Gph/YieH family. In terms of assembly, monomer. Mg(2+) serves as cofactor. In terms of processing, autophosphorylated.

It localises to the cytoplasm. It carries out the reaction beta-D-glucose 1-phosphate = beta-D-glucose 6-phosphate. Activated by phosphorylation. Competitively inhibited by alpha-D-galactose-1-phosphate. Functionally, catalyzes the interconversion of D-glucose 1-phosphate (G1P) and D-glucose 6-phosphate (G6P), forming beta-D-glucose 1,6-(bis)phosphate (beta-G16P) as an intermediate. The beta-phosphoglucomutase (Beta-PGM) acts on the beta-C(1) anomer of G1P. Glucose or lactose are used in preference to maltose, which is only utilized after glucose or lactose has been exhausted. It plays a key role in the regulation of the flow of carbohydrate intermediates in glycolysis and the formation of the sugar nucleotide UDP-glucose. The sequence is that of Beta-phosphoglucomutase from Lactococcus lactis subsp. lactis (strain IL1403) (Streptococcus lactis).